The sequence spans 588 residues: Probable G-protein coupled receptor 162 (588 aa).

Residues 1-17 lie on the Extracellular side of the membrane; the sequence is MARGGLGAEEASLRSNA. Residues 18–38 form a helical membrane-spanning segment; sequence LSWLACGLLALLANAWIILSI. The Cytoplasmic portion of the chain corresponds to 39–49; that stretch reads SAKQQKHKPLE. A helical transmembrane segment spans residues 50-70; sequence LLLCFLAGTHILMAAVPLTTF. The Extracellular portion of the chain corresponds to 71–91; sequence AVVQLRRQASSDYDWNESICK. N-linked (GlcNAc...) asparagine glycosylation occurs at Asn-86. The helical transmembrane segment at 92–112 threads the bilayer; it reads VFVSTYYTLALATCFTVASLS. Residues 113-133 lie on the Cytoplasmic side of the membrane; the sequence is YHRMWMVRWPVNYRLSNAKKQ. Residues 134 to 154 traverse the membrane as a helical segment; the sequence is ALHAVMGIWMVSFILSTLPSI. The Extracellular segment spans residues 155–174; the sequence is GWHNNGERYYARGCQFIVSK. A helical membrane pass occupies residues 175–195; it reads IGLGFGVCFSLLLLGGIVMGL. Topologically, residues 196–275 are cytoplasmic; that stretch reads VCVAITFYQT…SLQVTNLVSA (80 aa). Residues 276-296 form a helical membrane-spanning segment; the sequence is IVFLYDSLTGVPILVVSFFSL. The Extracellular portion of the chain corresponds to 297–303; that stretch reads KSDSAPP. Residues 304-324 traverse the membrane as a helical segment; it reads WMVLAVLWCSMAQTLLLPSFI. Residues 325–588 are Cytoplasmic-facing; sequence WSCERYRADV…GNPIFPQLTL (264 aa). Phosphoserine is present on residues Ser-413 and Ser-435. 2 disordered regions span residues 511 to 545 and 561 to 588; these read ETPLPSPTASPGPSPRRPRPLGFSPRRLSLGSPDS and SLTGSEGSSRAWGRPWGPGNPIFPQLTL. A compositionally biased stretch (pro residues) spans 514 to 525; sequence LPSPTASPGPSP. The segment covering 530–540 has biased composition (low complexity); sequence PLGFSPRRLSL.

Belongs to the G-protein coupled receptor 1 family.

The protein localises to the cell membrane. In terms of biological role, orphan receptor. In Mus musculus (Mouse), this protein is Probable G-protein coupled receptor 162 (Gpr162).